Reading from the N-terminus, the 240-residue chain is Glutathione S-transferase U9 (240 aa).

The GST N-terminal domain maps to 7-86 (NKVILHGSFA…YIDETWSNGP (80 aa)). Glutathione-binding positions include 17–18 (SP), 43–44 (NK), 57–58 (KI), and 70–71 (ES). The 135-residue stretch at 92–226 (DPYRRSKVRF…EQILEILRAF (135 aa)) folds into the GST C-terminal domain. Thr161 is subject to Phosphothreonine.

This sequence belongs to the GST superfamily. Tau family.

It localises to the cytoplasm. The protein localises to the cytosol. It carries out the reaction RX + glutathione = an S-substituted glutathione + a halide anion + H(+). Its function is as follows. May be involved in the conjugation of reduced glutathione to a wide number of exogenous and endogenous hydrophobic electrophiles and have a detoxification role against certain herbicides. This is Glutathione S-transferase U9 (GSTU9) from Arabidopsis thaliana (Mouse-ear cress).